The following is a 219-amino-acid chain: Response regulator ArlR (219 aa).

One can recognise a Response regulatory domain in the interval 3 to 116; sequence NILIVEDEQN…ELLARIRAVL (114 aa). At Asp-52 the chain carries 4-aspartylphosphate. A DNA-binding region (ompR/PhoB-type) is located at residues 122–219; sequence KDVLDINGII…TVRGVGYVIR (98 aa).

Phosphorylated by ArlS.

The protein localises to the cytoplasm. In terms of biological role, member of the two-component regulatory system ArlS/ArlR. This is Response regulator ArlR (arlR) from Staphylococcus epidermidis (strain ATCC 35984 / DSM 28319 / BCRC 17069 / CCUG 31568 / BM 3577 / RP62A).